Consider the following 210-residue polypeptide: Outer-membrane lipoprotein carrier protein (210 aa).

A signal peptide spans 1-23 (MLMFSRFRYIFFAVALLSGPVCA).

This sequence belongs to the LolA family. In terms of assembly, monomer.

Its subcellular location is the periplasm. Functionally, participates in the translocation of lipoproteins from the inner membrane to the outer membrane. Only forms a complex with a lipoprotein if the residue after the N-terminal Cys is not an aspartate (The Asp acts as a targeting signal to indicate that the lipoprotein should stay in the inner membrane). This is Outer-membrane lipoprotein carrier protein from Xylella fastidiosa (strain Temecula1 / ATCC 700964).